The chain runs to 61 residues: MAKLRITQIRSGIGGTSNQRATLRTLGLRKINATTVRDDRPEIRGMIRTVTHLVRVEEVDS.

The protein belongs to the universal ribosomal protein uL30 family. In terms of assembly, part of the 50S ribosomal subunit.

The sequence is that of Large ribosomal subunit protein uL30 from Frankia casuarinae (strain DSM 45818 / CECT 9043 / HFP020203 / CcI3).